The chain runs to 424 residues: Riboflavin biosynthesis protein RibBA (424 aa).

A DHBP synthase region spans residues 1-206 (MVTCEAGIAS…VDDLITYRWT (206 aa)). D-ribulose 5-phosphate contacts are provided by residues 32–33 (RE), Asp-37, 145–149 (RPGHT), and Glu-169. Glu-33 is a binding site for Mg(2+). His-148 provides a ligand contact to Mg(2+). The tract at residues 207–424 (FDSLVEHVSS…YETVERTSCC (218 aa)) is GTP cyclohydrolase II. Residue 257 to 261 (RVHSE) participates in GTP binding. Zn(2+) contacts are provided by Cys-262, Cys-273, and Cys-275. Residues Gln-278, 301-303 (EGR), and Thr-323 each bind GTP. The Proton acceptor; for GTP cyclohydrolase activity role is filled by Asp-335. Residue Arg-337 is the Nucleophile; for GTP cyclohydrolase activity of the active site. GTP is bound by residues Thr-358 and Lys-363.

This sequence in the N-terminal section; belongs to the DHBP synthase family. It in the C-terminal section; belongs to the GTP cyclohydrolase II family. It depends on Mg(2+) as a cofactor. Requires Mn(2+) as cofactor. Zn(2+) serves as cofactor.

The catalysed reaction is D-ribulose 5-phosphate = (2S)-2-hydroxy-3-oxobutyl phosphate + formate + H(+). It catalyses the reaction GTP + 4 H2O = 2,5-diamino-6-hydroxy-4-(5-phosphoribosylamino)-pyrimidine + formate + 2 phosphate + 3 H(+). Its pathway is cofactor biosynthesis; riboflavin biosynthesis; 2-hydroxy-3-oxobutyl phosphate from D-ribulose 5-phosphate: step 1/1. The protein operates within cofactor biosynthesis; riboflavin biosynthesis; 5-amino-6-(D-ribitylamino)uracil from GTP: step 1/4. Functionally, catalyzes the conversion of D-ribulose 5-phosphate to formate and 3,4-dihydroxy-2-butanone 4-phosphate. In terms of biological role, catalyzes the conversion of GTP to 2,5-diamino-6-ribosylamino-4(3H)-pyrimidinone 5'-phosphate (DARP), formate and pyrophosphate. This chain is Riboflavin biosynthesis protein RibBA, found in Chlamydia muridarum (strain MoPn / Nigg).